The chain runs to 284 residues: Nucleotide-binding protein TTE1834 (284 aa).

8–15 (GLSGAGKT) contributes to the ATP binding site. GTP is bound at residue 58–61 (DLRG).

This sequence belongs to the RapZ-like family.

In terms of biological role, displays ATPase and GTPase activities. The protein is Nucleotide-binding protein TTE1834 of Caldanaerobacter subterraneus subsp. tengcongensis (strain DSM 15242 / JCM 11007 / NBRC 100824 / MB4) (Thermoanaerobacter tengcongensis).